The following is a 118-amino-acid chain: Small ribosomal subunit protein uS13 (118 aa).

Residues 94 to 118 (GLPVRGQRTKTNARTRKGPRKPIKK) are disordered.

The protein belongs to the universal ribosomal protein uS13 family. As to quaternary structure, part of the 30S ribosomal subunit. Forms a loose heterodimer with protein S19. Forms two bridges to the 50S subunit in the 70S ribosome.

Its function is as follows. Located at the top of the head of the 30S subunit, it contacts several helices of the 16S rRNA. In the 70S ribosome it contacts the 23S rRNA (bridge B1a) and protein L5 of the 50S subunit (bridge B1b), connecting the 2 subunits; these bridges are implicated in subunit movement. Contacts the tRNAs in the A and P-sites. This Histophilus somni (strain 129Pt) (Haemophilus somnus) protein is Small ribosomal subunit protein uS13.